Consider the following 389-residue polypeptide: Na(+)/H(+) antiporter NhaA 1 (389 aa).

The next 11 membrane-spanning stretches (helical) occupy residues 12–32 (VLNE…ALLV), 62–82 (FLLW…GLEL), 97–117 (IVLP…LFAL), 128–148 (GWAI…MMCG), 157–177 (IFLL…IAIF), 184–204 (IVAF…NILG), 220–240 (ISVL…AFFI), 260–280 (FWLA…VNLS), 282–302 (IDIG…LFVG), 331–351 (LYGV…IDGL), and 365–385 (LAIL…LKFF).

It belongs to the NhaA Na(+)/H(+) (TC 2.A.33) antiporter family.

The protein resides in the cell inner membrane. It carries out the reaction Na(+)(in) + 2 H(+)(out) = Na(+)(out) + 2 H(+)(in). In terms of biological role, na(+)/H(+) antiporter that extrudes sodium in exchange for external protons. This chain is Na(+)/H(+) antiporter NhaA 1, found in Campylobacter jejuni subsp. jejuni serotype O:6 (strain 81116 / NCTC 11828).